Consider the following 207-residue polypeptide: Large ribosomal subunit protein uL4 (207 aa).

Residues Ala-50 to Gly-76 form a disordered region.

It belongs to the universal ribosomal protein uL4 family. In terms of assembly, part of the 50S ribosomal subunit.

One of the primary rRNA binding proteins, this protein initially binds near the 5'-end of the 23S rRNA. It is important during the early stages of 50S assembly. It makes multiple contacts with different domains of the 23S rRNA in the assembled 50S subunit and ribosome. In terms of biological role, forms part of the polypeptide exit tunnel. The sequence is that of Large ribosomal subunit protein uL4 from Staphylococcus aureus (strain MRSA252).